A 791-amino-acid chain; its full sequence is RAS guanyl-releasing protein 1 (791 aa).

In terms of domain architecture, N-terminal Ras-GEF spans 49–172 (LGKLSKGASL…RLIDTAQINS (124 aa)). The ras exchanger motif region; required for transforming activity stretch occupies residues 53-106 (SKGASLDELIQMCIQAFDLDGNMGQNNELLQIMLTMHGFLIPSTELLIKLRTLY). The Ras-GEF domain maps to 201 to 432 (EPQELAEHLT…YELSYAREPR (232 aa)). EF-hand domains are found at residues 466–501 (HVQR…FPFS) and 502–528 (FCVM…ASSI). Ca(2+) contacts are provided by Asp-479, Asp-481, Asp-483, Tyr-485, Glu-490, Asp-506, Asp-508, Glu-510, and Glu-517. The Phorbol-ester/DAG-type zinc-finger motif lies at 537 to 587 (LHNFQETTYLRPTFCDNCAGFLWGVIKQGYRCKDCGMNCHKQCKELVVFEC). Residues 671 to 715 (TQTENETQSLCLQVPSPPRSRTPDLTSHLPISPMPSPCPSPVPTR) are disordered. Positions 672–681 (QTENETQSLC) are enriched in polar residues. The span at 702 to 712 (SPMPSPCPSPV) shows a compositional bias: pro residues. A coiled-coil region spans residues 728–783 (IRKARAELRGGKAGIQELEKEKVFLKEENTALKIQLKDAHRRVETLRAELRKYVLD).

It belongs to the RASGRP family.

Its subcellular location is the cytoplasm. It localises to the cytosol. The protein resides in the cell membrane. The protein localises to the golgi apparatus membrane. It is found in the endoplasmic reticulum membrane. With respect to regulation, regulated by F-actin polymerization and probably by calcium. Functionally, functions as a diacylglycerol (DAG)-regulated nucleotide exchange factor specifically activating Ras through the exchange of bound GDP for GTP. The polypeptide is RAS guanyl-releasing protein 1 (rasgrp1) (Xenopus laevis (African clawed frog)).